The chain runs to 300 residues: UPF0761 membrane protein Patl_3954 (300 aa).

Helical transmembrane passes span 46–66, 103–123, 138–158, 184–204, 214–234, and 248–268; these read LLSL…FPAF, MGAI…SNID, IIFT…LIGL, MLKI…YMIV, ALVG…GFSF, and AMAV…VVLL.

It belongs to the UPF0761 family.

It localises to the cell inner membrane. This chain is UPF0761 membrane protein Patl_3954, found in Pseudoalteromonas atlantica (strain T6c / ATCC BAA-1087).